We begin with the raw amino-acid sequence, 75 residues long: Dermaseptin-SP5 (75 aa).

A signal peptide spans 1-22 (MAFLKKSLFLVLFLGLVSLSMC). A propeptide spanning residues 23-45 (EEEKRENEVEEEQEDDEQSELRR) is cleaved from the precursor. Residues 26 to 46 (KRENEVEEEQEDDEQSELRRS) form a disordered region. The segment covering 30 to 40 (EVEEEQEDDEQ) has biased composition (acidic residues). P72 carries the post-translational modification Proline amide. A propeptide spanning residues 74 to 75 (EQ) is cleaved from the precursor.

This sequence belongs to the frog skin active peptide (FSAP) family. Dermaseptin subfamily. As to expression, expressed by the skin glands.

The protein localises to the secreted. Its subcellular location is the target cell membrane. Antimicrobial peptide with weak activity against Gram-positive and Gram-negative bacteria and fungi. Has been tested against E.coli (MIC=96.06-256 uM), S.aureus (MIC&gt;192.12 uM), K.pneumoniae (MIC&gt;189.00 uM) and C.albicans (MIC=384.24-1024 uM). Probably acts by disturbing membrane functions with its alpha-helical amphipathic structure. May penetrate bacterial membranes, but stay at the mammalian membrane surface. Does not show hemolytic activity. Does not interact at all with cardiolipin. The sequence is that of Dermaseptin-SP5 from Agalychnis spurrelli (Gliding leaf frog).